We begin with the raw amino-acid sequence, 113 residues long: Large ribosomal subunit protein eL31B (113 aa).

This sequence belongs to the eukaryotic ribosomal protein eL31 family. As to quaternary structure, component of the large ribosomal subunit (LSU). Mature yeast ribosomes consist of a small (40S) and a large (60S) subunit. The 40S small subunit contains 1 molecule of ribosomal RNA (18S rRNA) and 33 different proteins (encoded by 57 genes). The large 60S subunit contains 3 rRNA molecules (25S, 5.8S and 5S rRNA) and 46 different proteins (encoded by 81 genes).

The protein resides in the cytoplasm. Its function is as follows. Component of the ribosome, a large ribonucleoprotein complex responsible for the synthesis of proteins in the cell. The small ribosomal subunit (SSU) binds messenger RNAs (mRNAs) and translates the encoded message by selecting cognate aminoacyl-transfer RNA (tRNA) molecules. The large subunit (LSU) contains the ribosomal catalytic site termed the peptidyl transferase center (PTC), which catalyzes the formation of peptide bonds, thereby polymerizing the amino acids delivered by tRNAs into a polypeptide chain. The nascent polypeptides leave the ribosome through a tunnel in the LSU and interact with protein factors that function in enzymatic processing, targeting, and the membrane insertion of nascent chains at the exit of the ribosomal tunnel. This Saccharomyces cerevisiae (strain ATCC 204508 / S288c) (Baker's yeast) protein is Large ribosomal subunit protein eL31B.